Consider the following 270-residue polypeptide: UPF0354 protein BA_4944/GBAA_4944/BAS4588 (270 aa).

It belongs to the UPF0354 family.

This is UPF0354 protein BA_4944/GBAA_4944/BAS4588 from Bacillus anthracis.